The sequence spans 556 residues: Glutamine--tRNA ligase (556 aa).

Positions 34-44 (PEPNGYLHIGH) match the 'HIGH' region motif. Residues 35–37 (EPN) and 41–47 (HIGHAKS) contribute to the ATP site. Positions 67 and 212 each coordinate L-glutamine. Residues Thr231, 261–262 (RL), and 269–271 (MSK) each bind ATP. The short motif at 268 to 272 (VMSKR) is the 'KMSKS' region element.

It belongs to the class-I aminoacyl-tRNA synthetase family. In terms of assembly, monomer.

The protein localises to the cytoplasm. It carries out the reaction tRNA(Gln) + L-glutamine + ATP = L-glutaminyl-tRNA(Gln) + AMP + diphosphate. This is Glutamine--tRNA ligase from Vibrio campbellii (strain ATCC BAA-1116).